A 158-amino-acid polypeptide reads, in one-letter code: 6,7-dimethyl-8-ribityllumazine synthase (158 aa).

Residues F22, 57–59 (AVE), and 81–83 (AVI) each bind 5-amino-6-(D-ribitylamino)uracil. 86–87 (GT) lines the (2S)-2-hydroxy-3-oxobutyl phosphate pocket. H89 functions as the Proton donor in the catalytic mechanism. F114 provides a ligand contact to 5-amino-6-(D-ribitylamino)uracil. R128 contributes to the (2S)-2-hydroxy-3-oxobutyl phosphate binding site.

This sequence belongs to the DMRL synthase family. Forms an icosahedral capsid composed of 60 subunits, arranged as a dodecamer of pentamers.

The enzyme catalyses (2S)-2-hydroxy-3-oxobutyl phosphate + 5-amino-6-(D-ribitylamino)uracil = 6,7-dimethyl-8-(1-D-ribityl)lumazine + phosphate + 2 H2O + H(+). The protein operates within cofactor biosynthesis; riboflavin biosynthesis; riboflavin from 2-hydroxy-3-oxobutyl phosphate and 5-amino-6-(D-ribitylamino)uracil: step 1/2. Its function is as follows. Catalyzes the formation of 6,7-dimethyl-8-ribityllumazine by condensation of 5-amino-6-(D-ribitylamino)uracil with 3,4-dihydroxy-2-butanone 4-phosphate. This is the penultimate step in the biosynthesis of riboflavin. The polypeptide is 6,7-dimethyl-8-ribityllumazine synthase (Shewanella piezotolerans (strain WP3 / JCM 13877)).